The sequence spans 791 residues: DUF1769 family protein duc1 (791 aa).

Positions 158-189 (ADSQESDTESLPEINDSSDVSLSDLPSTNVTP) are disordered. The span at 174-184 (SSDVSLSDLPS) shows a compositional bias: low complexity. Residues 373–379 (RYFTALE) carry the FFAT motif. Y374 carries the phosphotyrosine modification. Residue T376 is modified to Phosphothreonine. Disordered stretches follow at residues 381-505 (QQDQ…SNRR), 542-606 (NVAG…VDGK), and 630-658 (PKPV…NLDP). The segment covering 415–426 (LIKRMSLRSKKS) has biased composition (basic residues). Low complexity predominate over residues 444–453 (STASAASTSA). A compositionally biased stretch (basic and acidic residues) spans 455 to 473 (KTEKEKKMSAPRRSLDKLI). A phosphoserine mark is found at S477 and S493. The segment covering 477–487 (SLHRHHHHHHK) has biased composition (basic residues). Polar residues predominate over residues 555–564 (EQTSITSGVP). A Phosphoserine modification is found at S574. Residues 574–586 (STPEKIVEERSID) show a composition bias toward basic and acidic residues. Polar residues predominate over residues 587 to 601 (EVSQSNTPSSKQLPQ).

The protein belongs to the UPF0590 family. In terms of assembly, interacts (via FFAT-motif) with scs2 (via MSP domain); the interaction is direct and serves to restrict the localization of duc1 to areas of cell membrane-endoplasmic reticulum contact sites, and away from the cell division site.

Its subcellular location is the cell membrane. Functionally, promotes the proper distribution of phosphatidylinositol 4,5-bisphosphate (PtdIns(4,5)P2/PIP2) synthesis at the cell membrane. May bind phosphatidylinositol 4,5-bisphosphate (PtdIns(4,5)P2/PIP2) and is required for robust anchoring of the contractile ring to the cell membrane. The polypeptide is DUF1769 family protein duc1 (Schizosaccharomyces pombe (strain 972 / ATCC 24843) (Fission yeast)).